The primary structure comprises 248 residues: tRNA pseudouridine synthase A (248 aa).

Residue aspartate 53 is the Nucleophile of the active site. Tyrosine 111 contributes to the substrate binding site.

The protein belongs to the tRNA pseudouridine synthase TruA family. In terms of assembly, homodimer.

It carries out the reaction uridine(38/39/40) in tRNA = pseudouridine(38/39/40) in tRNA. Its function is as follows. Formation of pseudouridine at positions 38, 39 and 40 in the anticodon stem and loop of transfer RNAs. The chain is tRNA pseudouridine synthase A from Listeria monocytogenes serotype 4a (strain HCC23).